The sequence spans 285 residues: Inositol oxygenase (285 aa).

Arginine 29 provides a ligand contact to substrate. Residue serine 33 is modified to Phosphoserine. Residue 85 to 87 coordinates substrate; sequence DES. 3 residues coordinate Fe cation: histidine 98, histidine 123, and aspartate 124. Substrate contacts are provided by residues lysine 127 and 141–142; that span reads GD. Residues histidine 194, histidine 220, and aspartate 253 each coordinate Fe cation. Residue 220–221 participates in substrate binding; that stretch reads HS.

It belongs to the myo-inositol oxygenase family. Requires Fe cation as cofactor. As to expression, kidney specific.

It localises to the cytoplasm. It catalyses the reaction myo-inositol + O2 = D-glucuronate + H2O + H(+). The protein operates within polyol metabolism; myo-inositol degradation into D-glucuronate; D-glucuronate from myo-inositol: step 1/1. The protein is Inositol oxygenase (MIOX) of Homo sapiens (Human).